Reading from the N-terminus, the 74-residue chain is Putative membrane protein insertion efficiency factor (74 aa).

It belongs to the UPF0161 family.

Its subcellular location is the cell inner membrane. Functionally, could be involved in insertion of integral membrane proteins into the membrane. The sequence is that of Putative membrane protein insertion efficiency factor from Blochmanniella floridana.